Here is a 225-residue protein sequence, read N- to C-terminus: Orotate phosphoribosyltransferase (225 aa).

Residue Lys29 coordinates 5-phospho-alpha-D-ribose 1-diphosphate. Position 37–38 (37–38 (FF)) interacts with orotate. 5-phospho-alpha-D-ribose 1-diphosphate contacts are provided by residues 75 to 76 (YK), Arg101, Lys102, Lys105, His107, and 126 to 134 (DDVISAGTS). Residues Ser130 and Arg158 each contribute to the orotate site.

This sequence belongs to the purine/pyrimidine phosphoribosyltransferase family. PyrE subfamily. In terms of assembly, homodimer. Mg(2+) is required as a cofactor.

It catalyses the reaction orotidine 5'-phosphate + diphosphate = orotate + 5-phospho-alpha-D-ribose 1-diphosphate. It functions in the pathway pyrimidine metabolism; UMP biosynthesis via de novo pathway; UMP from orotate: step 1/2. Its function is as follows. Catalyzes the transfer of a ribosyl phosphate group from 5-phosphoribose 1-diphosphate to orotate, leading to the formation of orotidine monophosphate (OMP). The polypeptide is Orotate phosphoribosyltransferase (Ralstonia pickettii (strain 12J)).